The primary structure comprises 435 residues: Transcription activator AKTR-2 (435 aa).

The segment at residues 16–43 is a DNA-binding region (zn(2)-C6 fungal-type); the sequence is CDFCTQSKLRCNKNKPSCRRCTIQQQVC. The interval 49 to 103 is disordered; it reads RRTGRPPKHPRRADDSQETSGQHGHQDPMTSAPADSCEQQSSHLDLEGDDTDFTL. Over residues 50-59 the composition is skewed to basic residues; sequence RTGRPPKHPR.

The protein localises to the nucleus. Transcription factor that regulates the expression of the gene clusters that mediate the biosynthesis of the host-selective toxins (HSTs) AK-toxins responsible for Japanese pear black spot disease by the Japanese pear pathotype. AK-toxins are esters of 9,10-epoxy 8-hydroxy 9-methyldecatrienoic acid (EDA). On cellular level, AK-toxins affect plasma membrane of susceptible cells and cause a sudden increase in loss of K(+) after a few minutes of toxin treatment. The chain is Transcription activator AKTR-2 from Alternaria alternata (Alternaria rot fungus).